Consider the following 341-residue polypeptide: Ketol-acid reductoisomerase (NADP(+)) (341 aa).

Residues 2–181 (VKVYYNGDAN…GSARAGVIET (180 aa)) enclose the KARI N-terminal Rossmann domain. Residues 25 to 28 (YGSQ), Arg-48, Ser-52, and 82 to 85 (DEHQ) contribute to the NADP(+) site. His-107 is an active-site residue. NADP(+) is bound at residue Gly-133. The 146-residue stretch at 182-327 (TFKEETETDL…RELRKMMPFV (146 aa)) folds into the KARI C-terminal knotted domain. Mg(2+) is bound by residues Asp-190, Glu-194, Glu-226, and Glu-230. Ser-251 lines the substrate pocket.

Belongs to the ketol-acid reductoisomerase family. Mg(2+) serves as cofactor.

It carries out the reaction (2R)-2,3-dihydroxy-3-methylbutanoate + NADP(+) = (2S)-2-acetolactate + NADPH + H(+). It catalyses the reaction (2R,3R)-2,3-dihydroxy-3-methylpentanoate + NADP(+) = (S)-2-ethyl-2-hydroxy-3-oxobutanoate + NADPH + H(+). It functions in the pathway amino-acid biosynthesis; L-isoleucine biosynthesis; L-isoleucine from 2-oxobutanoate: step 2/4. Its pathway is amino-acid biosynthesis; L-valine biosynthesis; L-valine from pyruvate: step 2/4. Involved in the biosynthesis of branched-chain amino acids (BCAA). Catalyzes an alkyl-migration followed by a ketol-acid reduction of (S)-2-acetolactate (S2AL) to yield (R)-2,3-dihydroxy-isovalerate. In the isomerase reaction, S2AL is rearranged via a Mg-dependent methyl migration to produce 3-hydroxy-3-methyl-2-ketobutyrate (HMKB). In the reductase reaction, this 2-ketoacid undergoes a metal-dependent reduction by NADPH to yield (R)-2,3-dihydroxy-isovalerate. This is Ketol-acid reductoisomerase (NADP(+)) from Anoxybacillus flavithermus (strain DSM 21510 / WK1).